The sequence spans 453 residues: Phosphomannomutase (453 aa).

S96 (phosphoserine intermediate) is an active-site residue. Residues S96, D243, D245, and D247 each coordinate Mg(2+).

It belongs to the phosphohexose mutase family. Requires Mg(2+) as cofactor.

It carries out the reaction alpha-D-mannose 1-phosphate = D-mannose 6-phosphate. It functions in the pathway nucleotide-sugar biosynthesis; GDP-alpha-D-mannose biosynthesis; alpha-D-mannose 1-phosphate from D-fructose 6-phosphate: step 2/2. It participates in bacterial outer membrane biogenesis; LPS O-antigen biosynthesis. Involved in GDP-mannose biosynthesis which serves as the activated sugar nucleotide precursor for mannose residues in cell surface polysaccharides. This enzyme participates in synthesis of the LPS O7 antigen. This chain is Phosphomannomutase (manB), found in Escherichia coli.